A 320-amino-acid polypeptide reads, in one-letter code: Cytochrome f (320 aa).

Residues 1-35 (MENKNTFSWVKEQMTRSISVSIMIYVITQTSISNA) form the signal peptide. 4 residues coordinate heme: Y36, C56, C59, and H60. Residues 286–306 (VQGLLFFFASVILAQVFLVLK) form a helical membrane-spanning segment.

This sequence belongs to the cytochrome f family. The 4 large subunits of the cytochrome b6-f complex are cytochrome b6, subunit IV (17 kDa polypeptide, petD), cytochrome f and the Rieske protein, while the 4 small subunits are PetG, PetL, PetM and PetN. The complex functions as a dimer. Heme is required as a cofactor.

The protein resides in the plastid. It localises to the chloroplast thylakoid membrane. Its function is as follows. Component of the cytochrome b6-f complex, which mediates electron transfer between photosystem II (PSII) and photosystem I (PSI), cyclic electron flow around PSI, and state transitions. This is Cytochrome f from Lolium perenne (Perennial ryegrass).